The sequence spans 110 residues: Hydrogenase maturation factor HypA (110 aa).

Histidine 2 provides a ligand contact to Ni(2+). Residues cysteine 70, cysteine 73, cysteine 86, and cysteine 89 each contribute to the Zn(2+) site.

This sequence belongs to the HypA/HybF family.

Functionally, involved in the maturation of [NiFe] hydrogenases. Required for nickel insertion into the metal center of the hydrogenase. This chain is Hydrogenase maturation factor HypA, found in Geobacter sulfurreducens (strain ATCC 51573 / DSM 12127 / PCA).